A 191-amino-acid polypeptide reads, in one-letter code: GTP-binding protein CIN4 (191 aa).

GTP-binding positions include 23-30 (GLDNSGKS), 69-73 (DIGGQ), and 131-134 (NKID).

In terms of biological role, implicated in yeast microtubule function. The protein is GTP-binding protein CIN4 (CIN4) of Saccharomyces cerevisiae (strain ATCC 204508 / S288c) (Baker's yeast).